We begin with the raw amino-acid sequence, 185 residues long: Elongation factor P (185 aa).

This sequence belongs to the elongation factor P family.

The protein resides in the cytoplasm. It functions in the pathway protein biosynthesis; polypeptide chain elongation. In terms of biological role, involved in peptide bond synthesis. Stimulates efficient translation and peptide-bond synthesis on native or reconstituted 70S ribosomes in vitro. Probably functions indirectly by altering the affinity of the ribosome for aminoacyl-tRNA, thus increasing their reactivity as acceptors for peptidyl transferase. This Dictyoglomus thermophilum (strain ATCC 35947 / DSM 3960 / H-6-12) protein is Elongation factor P.